A 295-amino-acid polypeptide reads, in one-letter code: Threonine/homoserine exporter RhtA (295 aa).

Over 1–9 (MPGSLRKMP) the chain is Cytoplasmic. Residues 10–30 (VWLPIVILLVAMASIQGGASL) traverse the membrane as a helical segment. The EamA 1 domain occupies 30 to 135 (LAKSLFPLVG…VLAVLGLWFL (106 aa)). Over 31–38 (AKSLFPLV) the chain is Periplasmic. Residues 39–59 (GAPGVTALRLALGTLILIAFF) form a helical membrane-spanning segment. The Cytoplasmic segment spans residues 60-71 (KPWRLRFAKEQR). The chain crosses the membrane as a helical span at residues 72–92 (LPLLFYGVSLGGMNYLFYLSI). Residue Gln93 is a topological domain, periplasmic. The helical transmembrane segment at 94–114 (TVPLGIAVALEFTGPLAVALF) threads the bilayer. The Cytoplasmic portion of the chain corresponds to 115–118 (SSRR). Residues 119-139 (PVDFVWVVLAVLGLWFLLPLG) form a helical membrane-spanning segment. Topologically, residues 140–146 (QDVSHVD) are periplasmic. A helical transmembrane segment spans residues 147-167 (LTGCALALGAGACWAIYILSG). An EamA 2 domain is found at 159-278 (CWAIYILSGQ…LGAIIAASMG (120 aa)). Residues 168–175 (QRAGAEHG) are Cytoplasmic-facing. A helical transmembrane segment spans residues 176-196 (PATVAIGSLIAALIFVPIGAL). At 197-200 (QAGE) the chain is on the periplasmic side. The helical transmembrane segment at 201-221 (ALWHWSVIPLGLAVAILSTAL) threads the bilayer. At 222 to 237 (PYSLEMIALTRLPTRT) the chain is on the cytoplasmic side. The helical transmembrane segment at 238 to 258 (FGTLMSMEPALAAVSGMIFLG) threads the bilayer. Over 259-262 (ETLT) the chain is Periplasmic. The helical transmembrane segment at 263-283 (PIQLLALGAIIAASMGSTLTV) threads the bilayer. Residues 284–295 (RKESKIKELDIN) lie on the Cytoplasmic side of the membrane.

The protein belongs to the drug/metabolite transporter (DMT) superfamily. 10 TMS drug/metabolite exporter (DME) (TC 2.A.7.3) family.

The protein resides in the cell inner membrane. Functionally, involved in the efflux of threonine and homoserine. The polypeptide is Threonine/homoserine exporter RhtA (rhtA) (Escherichia coli O157:H7).